The chain runs to 167 residues: Leptin (167 aa).

The first 21 residues, 1 to 21, serve as a signal peptide directing secretion; that stretch reads MHWGTLCGFLWLWPYLFYVQA. An intrachain disulfide couples C117 to C167.

The protein belongs to the leptin family. In terms of assembly, interacts with SIGLEC6. As to expression, adipose tissue is the main source of leptin. It is also produced by other peripheral tissues such as the skeletal muscle. Expressed by intercalated and striated tracts of submandibular and parotid salivary gland intralobular ducts. Detected by fundic epithelium of the gastric mucosa. Secreted into blood and gastric juice.

It localises to the secreted. Functionally, key player in the regulation of energy balance and body weight control. Once released into the circulation, has central and peripheral effects by binding LEPR, found in many tissues, which results in the activation of several major signaling pathways. In the hypothalamus, acts as an appetite-regulating factor that induces a decrease in food intake and an increase in energy consumption by inducing anorexinogenic factors and suppressing orexigenic neuropeptides, also regulates bone mass and secretion of hypothalamo-pituitary-adrenal hormones. In the periphery, increases basal metabolism, influences reproductive function, regulates pancreatic beta-cell function and insulin secretion, is pro-angiogenic for endothelial cell and affects innate and adaptive immunity. In the arcuate nucleus of the hypothalamus, activates by depolarization POMC neurons inducing FOS and SOCS3 expression to release anorexigenic peptides and inhibits by hyperpolarization NPY neurons inducing SOCS3 with a consequent reduction on release of orexigenic peptides. In addition to its known satiety inducing effect, has a modulatory role in nutrient absorption. In the intestine, reduces glucose absorption by enterocytes by activating PKC and leading to a sequential activation of p38, PI3K and ERK signaling pathways which exerts an inhibitory effect on glucose absorption. Acts as a growth factor on certain tissues, through the activation of different signaling pathways increases expression of genes involved in cell cycle regulation such as CCND1, via JAK2-STAT3 pathway, or VEGFA, via MAPK1/3 and PI3K-AKT1 pathways. May also play an apoptotic role via JAK2-STAT3 pathway and up-regulation of BIRC5 expression. Pro-angiogenic, has mitogenic activity on vascular endothelial cells and plays a role in matrix remodeling by regulating the expression of matrix metalloproteinases (MMPs) and tissue inhibitors of metalloproteinases (TIMPs). In innate immunity, modulates the activity and function of neutrophils by increasing chemotaxis and the secretion of oxygen radicals. Increases phagocytosis by macrophages and enhances secretion of pro-inflammatory mediators. Increases cytotoxic ability of NK cells. Plays a pro-inflammatory role, in synergy with IL1B, by inducing NOS2 which promotes the production of IL6, IL8 and Prostaglandin E2, through a signaling pathway that involves JAK2, PI3K, MAP2K1/MEK1 and MAPK14/p38. In adaptive immunity, promotes the switch of memory T-cells towards T helper-1 cell immune responses. Increases CD4(+)CD25(-) T-cell proliferation and reduces autophagy during TCR (T-cell receptor) stimulation, through MTOR signaling pathway activation and BCL2 up-regulation. This Homo sapiens (Human) protein is Leptin.